The sequence spans 133 residues: Protein Ac75 (133 aa).

As to quaternary structure, interacts with protein Ac76.

The protein localises to the virion. The protein resides in the host cytoplasm. It is found in the host nucleus. Functionally, plays a role in nuclear egress of nucleocapsids and intranuclear microvesicle formation. The sequence is that of Protein Ac75 (Ac75) from Lepidoptera (butterflies and moths).